A 996-amino-acid chain; its full sequence is Low-density lipoprotein receptor-related protein 8 (996 aa).

A signal peptide spans methionine 1–alanine 28. The Extracellular segment spans residues aspartate 29–alanine 858. 8 LDL-receptor class A domains span residues glutamate 40–proline 76, threonine 79–serine 117, glutamate 120–proline 158, leucine 160–serine 196, alanine 199–glycine 238, alanine 250–serine 287, proline 290–leucine 326, and threonine 330–glycine 369. Intrachain disulfides connect cysteine 41/cysteine 53, cysteine 48/cysteine 66, cysteine 60/cysteine 75, cysteine 80/cysteine 92, cysteine 87/cysteine 105, cysteine 99/cysteine 116, cysteine 121/cysteine 135, cysteine 128/cysteine 148, cysteine 142/cysteine 157, cysteine 161/cysteine 173, cysteine 168/cysteine 186, cysteine 180/cysteine 195, cysteine 200/cysteine 213, cysteine 207/cysteine 226, cysteine 220/cysteine 237, cysteine 251/cysteine 264, cysteine 259/cysteine 277, cysteine 271/cysteine 286, cysteine 291/cysteine 303, cysteine 298/cysteine 316, cysteine 310/cysteine 325, cysteine 331/cysteine 344, cysteine 339/cysteine 357, cysteine 351/cysteine 368, cysteine 373/cysteine 384, cysteine 380/cysteine 393, cysteine 395/cysteine 407, cysteine 413/cysteine 423, cysteine 419/cysteine 432, and cysteine 434/cysteine 447. The Ca(2+) site is built by tryptophan 58, aspartate 61, aspartate 63, aspartate 65, aspartate 71, and glutamate 72. Residue asparagine 170 is glycosylated (N-linked (GlcNAc...) asparagine). Residues proline 364–glycine 408 enclose the EGF-like 1 domain. An EGF-like 2; calcium-binding domain is found at aspartate 409–lysine 448. LDL-receptor class B repeat units lie at residues asparagine 495 to histidine 541, lysine 542 to arginine 584, glycine 585 to serine 628, glutamine 629 to glutamate 671, and aspartate 672 to leucine 714. Asparagine 551 carries N-linked (GlcNAc...) asparagine glycosylation. The segment at serine 773–proline 831 is clustered O-linked oligosaccharides. Residues threonine 778–glutamine 851 form a disordered region. The segment covering threonine 802 to alanine 815 has biased composition (polar residues). The N-linked (GlcNAc...) asparagine glycan is linked to asparagine 805. The span at proline 824 to serine 839 shows a compositional bias: low complexity. Residue asparagine 840 is glycosylated (N-linked (GlcNAc...) asparagine). Polar residues predominate over residues asparagine 840–glutamine 851. The chain crosses the membrane as a helical span at residues alanine 859–tryptophan 881. The Cytoplasmic segment spans residues arginine 882–proline 996.

The protein belongs to the LDLR family. As to quaternary structure, homooligomer. Interacts with VLDLR. Reelin associates with two or more receptor molecules. Interacts with DAB1 and JNK-interacting proteins. Interacts with SNX17. Interacts with PCSK9. Interacts with MDK; this interaction is calcium dependent. Interacts with CLU. In terms of processing, O-glycosylated. Some alternatively spliced isoforms lack the O-linked sugar domain. Undergoes sequential, furin and gamma-secretase dependent, proteolytic processing, resulting in the extracellular release of the entire ligand-binding domain as a soluble polypeptide and in the intracellular domain (ICD) release into the cytoplasm. The gamma-secretase-dependent proteolytical processing occurs after the bulk of the extracellular domain has been shed, in a furin-dependent manner, in alternatively spliced isoforms carrying the furin cleavage site. Hypoglycosylation (mainly hypo-O-glycosylation) leads to increased extracellular cleavage, which in turn results in accelerating release of the intracellular domain (ICD) by the gamma-secretase. The resulting receptor fragment is able to inhibit Reelin signaling and in particular the Reelin-induced DAB1 phosphorylation. Post-translationally, tyrosine phosphorylated upon apoE binding. In terms of processing, ubiquitinated by MYLIP leading to degradation. Expressed in neurons throughout the brain, with strong expression in pyramidal neurons of the hippocampus, granule cells of the dentate gyrus, cortical neurons and Purkinje cells of the cerebellum. Also expressed in the epithelium of the choroid plexus and of the blood vessels (apical expression), as well as in the epididymis.

It is found in the cell membrane. The protein resides in the secreted. In terms of biological role, cell surface receptor for Reelin (RELN) and apolipoprotein E (apoE)-containing ligands. LRP8 participates in transmitting the extracellular Reelin signal to intracellular signaling processes, by binding to DAB1 on its cytoplasmic tail. Reelin acts via both the VLDL receptor (VLDLR) and LRP8 to regulate DAB1 tyrosine phosphorylation and microtubule function in neurons. LRP8 has higher affinity for Reelin than VLDLR. LRP8 is thus a key component of the Reelin pathway which governs neuronal layering of the forebrain during embryonic brain development. Binds the endoplasmic reticulum resident receptor-associated protein (RAP). Binds dimers of beta 2-glycoprotein I and may be involved in the suppression of platelet aggregation in the vasculature. Highly expressed in the initial segment of the epididymis, where it affects the functional expression of clusterin and phospholipid hydroperoxide glutathione peroxidase (PHGPx), two proteins required for sperm maturation. May also function as an endocytic receptor. Not required for endocytic uptake of SEPP1 in the kidney which is mediated by LRP2. Together with its ligand, apolipoprotein E (apoE), may indirectly play a role in the suppression of the innate immune response by controlling the survival of myeloid-derived suppressor cells. The protein is Low-density lipoprotein receptor-related protein 8 (Lrp8) of Mus musculus (Mouse).